The sequence spans 283 residues: Thymidylate synthase (283 aa).

Arg22 is a binding site for dUMP. The Nucleophile role is filled by Cys160. Residues Arg180–Asp183, Asn191, and His221–Tyr223 contribute to the dUMP site. (6R)-5,10-methylene-5,6,7,8-tetrahydrofolate is bound at residue Asp183. Ser282 provides a ligand contact to (6R)-5,10-methylene-5,6,7,8-tetrahydrofolate.

The protein belongs to the thymidylate synthase family. Bacterial-type ThyA subfamily. In terms of assembly, homodimer.

It is found in the cytoplasm. The catalysed reaction is dUMP + (6R)-5,10-methylene-5,6,7,8-tetrahydrofolate = 7,8-dihydrofolate + dTMP. Its pathway is pyrimidine metabolism; dTTP biosynthesis. In terms of biological role, catalyzes the reductive methylation of 2'-deoxyuridine-5'-monophosphate (dUMP) to 2'-deoxythymidine-5'-monophosphate (dTMP) while utilizing 5,10-methylenetetrahydrofolate (mTHF) as the methyl donor and reductant in the reaction, yielding dihydrofolate (DHF) as a by-product. This enzymatic reaction provides an intracellular de novo source of dTMP, an essential precursor for DNA biosynthesis. The sequence is that of Thymidylate synthase from Shewanella sediminis (strain HAW-EB3).